The chain runs to 348 residues: Hereditary hemochromatosis protein homolog (348 aa).

The N-terminal stretch at 1 to 22 (MGPRARPALFFLILLRTVAAQG) is a signal peptide. Residues 23–114 (RPPRSHSLRY…IMDNHNHSKE (92 aa)) form an alpha-1 region. Residues 23-306 (RPPRSHSLRY…WEPSLSNTLV (284 aa)) lie on the Extracellular side of the membrane. N-linked (GlcNAc...) asparagine glycans are attached at residues Asn-110, Asn-130, and Asn-234. The segment at 115-205 (SHTLQVILGC…ELGRGVLDQQ (91 aa)) is alpha-2. 2 cysteine pairs are disulfide-bonded: Cys-124/Cys-187 and Cys-225/Cys-282. Positions 206-297 (VPPLVKVTHH…GLDQPLTATW (92 aa)) are alpha-3. In terms of domain architecture, Ig-like C1-type spans 207 to 296 (PPLVKVTHHV…PGLDQPLTAT (90 aa)). Residues 298 to 306 (EPSLSNTLV) form a connecting peptide region. Residues 307–330 (TGVISGIAVCVIIFFIGILFRILR) form a helical membrane-spanning segment. Residues 331 to 348 (KRQASRGAMGDYVLGECE) are Cytoplasmic-facing.

Belongs to the MHC class I family. Binds TFR through the extracellular domain in a pH-dependent manner.

Its subcellular location is the cell membrane. In terms of biological role, binds to transferrin receptor (TFR) and reduces its affinity for iron-loaded transferrin. The polypeptide is Hereditary hemochromatosis protein homolog (HFE) (Ceratotherium simum (White rhinoceros)).